The sequence spans 270 residues: 4-hydroxy-tetrahydrodipicolinate reductase (270 aa).

NAD(+) contacts are provided by residues 11 to 16 (GASGRM) and Glu-37. Arg-38 contributes to the NADP(+) binding site. Residues 101–103 (GTT) and 125–128 (SPNM) each bind NAD(+). His-158 functions as the Proton donor/acceptor in the catalytic mechanism. His-159 provides a ligand contact to (S)-2,3,4,5-tetrahydrodipicolinate. The Proton donor role is filled by Lys-162. 168–169 (GT) lines the (S)-2,3,4,5-tetrahydrodipicolinate pocket.

This sequence belongs to the DapB family.

The protein localises to the cytoplasm. It carries out the reaction (S)-2,3,4,5-tetrahydrodipicolinate + NAD(+) + H2O = (2S,4S)-4-hydroxy-2,3,4,5-tetrahydrodipicolinate + NADH + H(+). The enzyme catalyses (S)-2,3,4,5-tetrahydrodipicolinate + NADP(+) + H2O = (2S,4S)-4-hydroxy-2,3,4,5-tetrahydrodipicolinate + NADPH + H(+). It functions in the pathway amino-acid biosynthesis; L-lysine biosynthesis via DAP pathway; (S)-tetrahydrodipicolinate from L-aspartate: step 4/4. Its function is as follows. Catalyzes the conversion of 4-hydroxy-tetrahydrodipicolinate (HTPA) to tetrahydrodipicolinate. In Shewanella denitrificans (strain OS217 / ATCC BAA-1090 / DSM 15013), this protein is 4-hydroxy-tetrahydrodipicolinate reductase.